We begin with the raw amino-acid sequence, 273 residues long: SPRY domain-containing SOCS box protein 1 (273 aa).

Tyr-31 is subject to Phosphotyrosine. The 199-residue stretch at 33–231 folds into the B30.2/SPRY domain; that stretch reads KPTRLDLLLD…IRMRYLNGLD (199 aa). In terms of domain architecture, SOCS box spans 232–273; sequence PEPLPLMDLCRRSVRLALGKERLGAIPALPLPASLKAYLLYQ.

Belongs to the SPSB family. In terms of assembly, component of the probable ECS(SPSB1) E3 ubiquitin-protein ligase complex which contains CUL5, RNF7/RBX2, Elongin BC complex and SPSB1. Interacts with CUL5, RNF7, ELOB and ELOC. Directly interacts with MET tyrosine kinase domain in the presence and in the absence of HGF, however HGF treatment has a positive effect on this interaction. When phosphorylated, interacts with RASA1 without affecting its stability. Interacts (via B30.2/SPRY domain) with PAWR; this interaction is direct and occurs in association with the Elongin BC complex. Interacts with EPHB2. Interacts with NOS2.

It localises to the cytoplasm. It is found in the cytosol. It functions in the pathway protein modification; protein ubiquitination. In terms of biological role, substrate recognition component of a SCF-like ECS (Elongin BC-CUL2/5-SOCS-box protein) E3 ubiquitin-protein ligase complex which mediates the ubiquitination and subsequent proteasomal degradation of target proteins. Negatively regulates nitric oxide (NO) production and limits cellular toxicity in activated macrophages by mediating the ubiquitination and proteasomal degradation of NOS2. Acts as a bridge which links the NOS2 with the ECS E3 ubiquitin ligase complex components ELOC and CUL5. The polypeptide is SPRY domain-containing SOCS box protein 1 (Spsb1) (Mus musculus (Mouse)).